The chain runs to 502 residues: Maturase K (502 aa).

Belongs to the intron maturase 2 family. MatK subfamily.

The protein localises to the plastid. The protein resides in the chloroplast. Its function is as follows. Usually encoded in the trnK tRNA gene intron. Probably assists in splicing its own and other chloroplast group II introns. The polypeptide is Maturase K (Cephalotaxus fortunei (Chinese plum-yew)).